Consider the following 314-residue polypeptide: MGVGRSARGRGGAASGVLLALAAALLAAGSASEYDYVSFQSDIGSYQSGRFYTKPPQCVDIPVDLRLCHNVGYKKMVLPNLLEHETMAEVKQQASSWVPLLNKNCHMGTQVFLCSLFAPVCLDRPIYPCRWLCEAVRDSCEPVMQFFGFYWPEMLKCDKFPEGDVCIAMTPPNTTEASKPQGTTVCPPCDNELKSEAIIEHLCASEFALRMKIKEVKKENGDKKIVPKKKKPLKLGPIKKKELKRLVLFLKNGADCPCHQLDNLSHNFLIMGRKVKSQYLLTAIHKWDKKNKEFKNFMKRMKNHECPTFQSVFK.

An N-terminal signal peptide occupies residues 1–31 (MGVGRSARGRGGAASGVLLALAAALLAAGSA). The FZ domain maps to 53 to 169 (TKPPQCVDIP…FPEGDVCIAM (117 aa)). 5 cysteine pairs are disulfide-bonded: Cys58–Cys121, Cys68–Cys114, Cys105–Cys140, Cys129–Cys166, and Cys133–Cys157. Residue Asn173 is glycosylated (N-linked (GlcNAc...) asparagine). 3 cysteine pairs are disulfide-bonded: Cys186-Cys256, Cys189-Cys258, and Cys203-Cys306. Residues 186 to 306 (CPPCDNELKS…FMKRMKNHEC (121 aa)) form the NTR domain.

It belongs to the secreted frizzled-related protein (sFRP) family. Interacts with WNT8, WNT1, WNT2, WNT4 and FRZD6. Interacts with MYOC. As to expression, highly expressed in kidney and embryonic heart. Also highly expressed in the eye, where it is principally localized to the ciliary body and the lens epithelium. Weaker expression in heart, lung and brain. In the brain, is expressed exclusively in the choroid plexus.

The protein localises to the secreted. In terms of biological role, soluble frizzled-related proteins (sFRPS) function as modulators of Wnt signaling through direct interaction with Wnts. They have a role in regulating cell growth and differentiation in specific cell types. SFRP1 decreases intracellular beta-catenin levels. Has antiproliferative effects on vascular cells, in vitro and in vivo, and can induce, in vivo, an angiogenic response. In vascular cell cycle, delays the G1 phase and entry into the S phase. In kidney development, inhibits tubule formation and bud growth in metanephroi. Inhibits WNT1/WNT4-mediated TCF-dependent transcription. The sequence is that of Secreted frizzled-related protein 1 from Mus musculus (Mouse).